We begin with the raw amino-acid sequence, 428 residues long: Probable protein phosphatase 2C 12 (428 aa).

One can recognise a PPM-type phosphatase domain in the interval 24–293 (KIDNPELIHG…DDTTCIVVDI (270 aa)). Residues aspartate 69, glycine 70, aspartate 245, and aspartate 284 each coordinate Mn(2+). Residues 301-331 (ASVPPPKKQGKGMLKSMFKRKTSDSSSNIEK) form a disordered region.

Belongs to the PP2C family. It depends on Mg(2+) as a cofactor. The cofactor is Mn(2+).

The catalysed reaction is O-phospho-L-seryl-[protein] + H2O = L-seryl-[protein] + phosphate. It catalyses the reaction O-phospho-L-threonyl-[protein] + H2O = L-threonyl-[protein] + phosphate. This chain is Probable protein phosphatase 2C 12, found in Arabidopsis thaliana (Mouse-ear cress).